The primary structure comprises 461 residues: Bifunctional protein HldE (461 aa).

The ribokinase stretch occupies residues 1–315 (MKKILVIGDL…LILNQTHPKI (315 aa)). ATP is bound at residue 191-194 (NRTE). Residue aspartate 260 is part of the active site. A cytidylyltransferase region spans residues 332 to 461 (FTNGCFDLLH…IEKIKRTCND (130 aa)).

This sequence in the N-terminal section; belongs to the carbohydrate kinase PfkB family. The protein in the C-terminal section; belongs to the cytidylyltransferase family. Homodimer.

The enzyme catalyses D-glycero-beta-D-manno-heptose 7-phosphate + ATP = D-glycero-beta-D-manno-heptose 1,7-bisphosphate + ADP + H(+). It carries out the reaction D-glycero-beta-D-manno-heptose 1-phosphate + ATP + H(+) = ADP-D-glycero-beta-D-manno-heptose + diphosphate. It functions in the pathway nucleotide-sugar biosynthesis; ADP-L-glycero-beta-D-manno-heptose biosynthesis; ADP-L-glycero-beta-D-manno-heptose from D-glycero-beta-D-manno-heptose 7-phosphate: step 1/4. It participates in nucleotide-sugar biosynthesis; ADP-L-glycero-beta-D-manno-heptose biosynthesis; ADP-L-glycero-beta-D-manno-heptose from D-glycero-beta-D-manno-heptose 7-phosphate: step 3/4. Its pathway is bacterial outer membrane biogenesis; LPS core biosynthesis. In terms of biological role, catalyzes the phosphorylation of D-glycero-D-manno-heptose 7-phosphate at the C-1 position to selectively form D-glycero-beta-D-manno-heptose-1,7-bisphosphate. Catalyzes the ADP transfer from ATP to D-glycero-beta-D-manno-heptose 1-phosphate, yielding ADP-D-glycero-beta-D-manno-heptose. This Helicobacter pylori (strain ATCC 700392 / 26695) (Campylobacter pylori) protein is Bifunctional protein HldE.